Reading from the N-terminus, the 485-residue chain is Glutamyl-tRNA(Gln) amidotransferase subunit A (485 aa).

Active-site charge relay system residues include Lys-79 and Ser-154. Catalysis depends on Ser-178, which acts as the Acyl-ester intermediate.

The protein belongs to the amidase family. GatA subfamily. Heterotrimer of A, B and C subunits.

The catalysed reaction is L-glutamyl-tRNA(Gln) + L-glutamine + ATP + H2O = L-glutaminyl-tRNA(Gln) + L-glutamate + ADP + phosphate + H(+). In terms of biological role, allows the formation of correctly charged Gln-tRNA(Gln) through the transamidation of misacylated Glu-tRNA(Gln) in organisms which lack glutaminyl-tRNA synthetase. The reaction takes place in the presence of glutamine and ATP through an activated gamma-phospho-Glu-tRNA(Gln). This chain is Glutamyl-tRNA(Gln) amidotransferase subunit A, found in Bacillus velezensis (strain DSM 23117 / BGSC 10A6 / LMG 26770 / FZB42) (Bacillus amyloliquefaciens subsp. plantarum).